Consider the following 669-residue polypeptide: Polyamine deacetylase HDAC10 (669 aa).

The interval 1-323 is histone deacetylase; the sequence is MGTALVYHED…VCMTVQTLLG (323 aa). Residue aspartate 20 coordinates substrate. A Substrate specificity motif is present at residues 21 to 24; that stretch reads PECE. Histidine 135 serves as the catalytic Proton donor/acceptor. Zn(2+) contacts are provided by aspartate 172, histidine 174, and aspartate 265. Position 305 (tyrosine 305) interacts with substrate. Polar residues predominate over residues 361–373; that stretch reads DVTAVPMSPSSHS. Residues 361 to 387 are disordered; the sequence is DVTAVPMSPSSHSPEGRPPPLLPGGPV. Residue serine 393 is modified to Phosphoserine.

It belongs to the histone deacetylase family. HD type 2 subfamily. As to quaternary structure, interacts with HDAC3. Interacts with HDAC2 and NCOR2/SMRT. Interacts with HSPA8/HSC70. Interacts with MSH2. In terms of tissue distribution, widely expressed with high levels in liver and kidney.

It localises to the cytoplasm. It is found in the nucleus. It carries out the reaction N(8)-acetylspermidine + H2O = spermidine + acetate. The catalysed reaction is N-acetylputrescine + H2O = putrescine + acetate. The enzyme catalyses N-acetylcadaverine + H2O = cadaverine + acetate. It catalyses the reaction N(6)-acetyl-L-lysyl-[protein] + H2O = L-lysyl-[protein] + acetate. Polyamine deacetylase (PDAC), which acts preferentially on N(8)-acetylspermidine, and also on acetylcadaverine and acetylputrescine. Exhibits attenuated catalytic activity toward N(1),N(8)-diacetylspermidine and very low activity, if any, toward N(1)-acetylspermidine. Histone deacetylase activity has been observed in vitro. Has also been shown to be involved in MSH2 deacetylation. The physiological relevance of protein/histone deacetylase activity is unclear and could be very weak. May play a role in the promotion of late stages of autophagy, possibly autophagosome-lysosome fusion and/or lysosomal exocytosis in neuroblastoma cells. May play a role in homologous recombination. May promote DNA mismatch repair. The polypeptide is Polyamine deacetylase HDAC10 (HDAC10) (Homo sapiens (Human)).